The chain runs to 701 residues: 1,4-alpha-glucan branching enzyme GlgB (701 aa).

The active-site Nucleophile is D381. E434 (proton donor) is an active-site residue.

Belongs to the glycosyl hydrolase 13 family. GlgB subfamily. Monomer.

It carries out the reaction Transfers a segment of a (1-&gt;4)-alpha-D-glucan chain to a primary hydroxy group in a similar glucan chain.. It participates in glycan biosynthesis; glycogen biosynthesis. In terms of biological role, catalyzes the formation of the alpha-1,6-glucosidic linkages in glycogen by scission of a 1,4-alpha-linked oligosaccharide from growing alpha-1,4-glucan chains and the subsequent attachment of the oligosaccharide to the alpha-1,6 position. This is 1,4-alpha-glucan branching enzyme GlgB from Jannaschia sp. (strain CCS1).